The chain runs to 144 residues: D-aminoacyl-tRNA deacylase (144 aa).

A Gly-cisPro motif, important for rejection of L-amino acids motif is present at residues 136-137; sequence GP.

It belongs to the DTD family. In terms of assembly, homodimer.

It localises to the cytoplasm. It catalyses the reaction glycyl-tRNA(Ala) + H2O = tRNA(Ala) + glycine + H(+). The catalysed reaction is a D-aminoacyl-tRNA + H2O = a tRNA + a D-alpha-amino acid + H(+). Its function is as follows. An aminoacyl-tRNA editing enzyme that deacylates mischarged D-aminoacyl-tRNAs. Also deacylates mischarged glycyl-tRNA(Ala), protecting cells against glycine mischarging by AlaRS. Acts via tRNA-based rather than protein-based catalysis; rejects L-amino acids rather than detecting D-amino acids in the active site. By recycling D-aminoacyl-tRNA to D-amino acids and free tRNA molecules, this enzyme counteracts the toxicity associated with the formation of D-aminoacyl-tRNA entities in vivo and helps enforce protein L-homochirality. The chain is D-aminoacyl-tRNA deacylase from Vibrio atlanticus (strain LGP32) (Vibrio splendidus (strain Mel32)).